Consider the following 1160-residue polypeptide: MVLTIYPDELVQIVSDKIASNKGKITLNQLWDISGKYFDLSDKKVKQFVLSCVILKKDIEVYCDGAITTKNVTDIIGDANHSYSVGITEDSLWTLLTGYTKKESTIGNSAFELLLEVAKSGEKGINTMDLAQVTGQDPRSVTGRIKKINHLLTSSQLIYKGHVVKQLKLKKFSHDGVDSNPYINIRDHLATIVEVVKRSKNGIRQIIDLKRELKFDKEKRLSKAFIAAIAWLDEKEYLKKVLVVSPKNPAIKIRCVKYVKDIPDSKGSPSFEYDSNSADEDSVSDSKAAFEDEDLVEGLDNFNATDLLQNQGLVMEEKEDAVKNEVLLNRFYPLQNQTYDIADKSGLKGISTMDVVNRITGKEFQRAFTKSSEYYLESVDKQKENTGGYRLFRIYDFEGKKKFFRLFTAQNFQKLTNAEDEISVPKGFDELGKSRTDLKTLNEDNFVALNNTVRFTTDSDGQDIFFWHGELKIPPNSKKTPNKNKRKRQVKNSTNASVAGNISNPKRIKLEQHVSTAQEPKSAEDSPSSNGGTVVKGKVVNFGGFSARSLRSLQRQRAILKVMNTIGGVAYLREQFYESVSKYMGSTTTLDKKTVRGDVDLMVESEKLGARTEPVSGRKIIFLPTVGEDAIQRYILKEKDSKKATFTDVIHDTEIYFFDQTEKNRFHRGKKSVERIRKFQNRQKNAKIKASDDAISKKSTSVNVSDGKIKRRDKKVSAGRTTVVVENTKEDKTVYHAGTKDGVQALIRAVVVTKSIKNEIMWDKITKLFPNNSLDNLKKKWTARRVRMGHSGWRAYVDKWKKMLVLAIKSEKISLRDVEELDLIKLLDIWTSFDEKEIKRPLFLYKNYEENRKKFTLVRDDTLTHSGNDLAMSSMIQREISSLKKTYTRKISASTKDLSKSQSDDYIRTVIRSILIESPSTTRNEIEALKNVGNESIDNVIMDMAKEKQIYLHGSKLECTDTLPDILENRGNYKDFGVAFQYRCKVNELLEAGNAIVINQEPSDISSWVLIDLISGELLNMDVIPMVRNVRPLTYTSRRFEIRTLTPPLIIYANSQTKLNTARKSAVKVPLGKPFSRLWVNGSGSIRPNIWKQVVTMVVNEIIFHPGITLSRLQSRCREVLSLHEISEICKWLLERQVLITTDFDGYWVNHNWYSIYEST.

Positions 475-533 are disordered; it reads PNSKKTPNKNKRKRQVKNSTNASVAGNISNPKRIKLEQHVSTAQEPKSAEDSPSSNGGT. Residues 480 to 490 are compositionally biased toward basic residues; that stretch reads TPNKNKRKRQV. Polar residues-rich tracts occupy residues 491-504 and 513-529; these read KNSTNASVAGNISN and HVSTAQEPKSAEDSPSS. A Phosphoserine modification is found at serine 546.

Component of the TFIIIC complex composed of TFC1, TFC3, TFC4, TFC6, TFC7 and TFC8. The subunits are organized in two globular domains, tauA and tauB, connected by a proteolysis-sensitive and flexible linker. Interacts with TFC1, TFC4 and TFC6.

Its subcellular location is the nucleus. The protein resides in the mitochondrion. Its function is as follows. TFIIIC mediates tRNA and 5S RNA gene activation by binding to intragenic promoter elements. Upstream of the transcription start site, TFIIIC assembles the initiation complex TFIIIB-TFIIIC-tDNA, which is sufficient for RNA polymerase III recruitment and function. Part of the tauB domain of TFIIIC that binds boxB DNA promoter sites of tRNA and similar genes. TFC3 is essential for cell viability. Cooperates with TFC6 in DNA binding. In Saccharomyces cerevisiae (strain ATCC 204508 / S288c) (Baker's yeast), this protein is Transcription factor tau 138 kDa subunit (TFC3).